We begin with the raw amino-acid sequence, 428 residues long: Putative gustatory receptor 2a (428 aa).

At 1 to 40 the chain is on the cytoplasmic side; that stretch reads MDTLRALEPLHRACQVCNLWPWRLAPPPDSEGILLRRSRW. The chain crosses the membrane as a helical span at residues 41–61; the sequence is LELYGWTVLIAATSFTVYGLF. Over 62–145 the chain is Extracellular; sequence QESSVEEKQD…INMRRQTSRR (84 aa). The chain crosses the membrane as a helical span at residues 146 to 166; that stretch reads AVWILWGYAVSQLLILGAKLL. The Cytoplasmic portion of the chain corresponds to 167–173; the sequence is SRGDRFP. A helical membrane pass occupies residues 174–194; that stretch reads IYWISYLLPLLVCGLRYFQIF. A glycan (N-linked (GlcNAc...) asparagine) is linked at N195. Over 195-250 the chain is Extracellular; the sequence is NATQLVRQRLDVLLVALQQLQLHQKGPAVDTVLEEQEDLEEAAMDRLIAVRLVYQR. The helical transmembrane segment at 251-271 threads the bilayer; sequence VWALVALLNRCYGLSMLMQVG. Residues 272–300 lie on the Cytoplasmic side of the membrane; the sequence is NDFLAITSNCYWMFLNFRQSAASPFDILQ. The chain crosses the membrane as a helical span at residues 301-321; it reads IVASGVWSAPHLGNVLVLSLL. Residues 322–349 are Extracellular-facing; that stretch reads CDRTAQCASRLALCLHQVSVDLRNESHN. Residue N345 is glycosylated (N-linked (GlcNAc...) asparagine). The chain crosses the membrane as a helical span at residues 350-370; the sequence is ALVGTLVRYCAPLIILVPLQI. The Cytoplasmic portion of the chain corresponds to 371 to 395; the sequence is TQFSLQLLHQRLHFSAAGFFNVDCT. The helical transmembrane segment at 396–416 threads the bilayer; it reads LLYTIVGATTTYLIILIQFHM. Residues 417 to 428 are Extracellular-facing; that stretch reads SESTIGSDSNGQ.

Belongs to the insect chemoreceptor superfamily. Gustatory receptor (GR) family. Gr2a subfamily. In terms of tissue distribution, expressed in neurons of the terminal external chemosensory organ, the dorsal external chemosensory organ, as well as in the dorsal pharyngeal sense organ of larvae.

The protein resides in the cell membrane. Its function is as follows. Probable gustatory receptor which mediates acceptance or avoidance behavior, depending on its not yet determined substrates. This Drosophila melanogaster (Fruit fly) protein is Putative gustatory receptor 2a (Gr2a).